A 474-amino-acid polypeptide reads, in one-letter code: 3-isopropylmalate dehydratase large subunit (474 aa).

Positions 350, 415, and 418 each coordinate [4Fe-4S] cluster.

This sequence belongs to the aconitase/IPM isomerase family. LeuC type 1 subfamily. In terms of assembly, heterodimer of LeuC and LeuD. [4Fe-4S] cluster is required as a cofactor.

The catalysed reaction is (2R,3S)-3-isopropylmalate = (2S)-2-isopropylmalate. Its pathway is amino-acid biosynthesis; L-leucine biosynthesis; L-leucine from 3-methyl-2-oxobutanoate: step 2/4. Its function is as follows. Catalyzes the isomerization between 2-isopropylmalate and 3-isopropylmalate, via the formation of 2-isopropylmaleate. This Phenylobacterium zucineum (strain HLK1) protein is 3-isopropylmalate dehydratase large subunit.